We begin with the raw amino-acid sequence, 300 residues long: Acetylglutamate kinase (300 aa).

Residues 72–73 (GG), Arg94, and Asn197 each bind substrate.

The protein belongs to the acetylglutamate kinase family. ArgB subfamily.

The protein resides in the cytoplasm. It carries out the reaction N-acetyl-L-glutamate + ATP = N-acetyl-L-glutamyl 5-phosphate + ADP. It functions in the pathway amino-acid biosynthesis; L-arginine biosynthesis; N(2)-acetyl-L-ornithine from L-glutamate: step 2/4. In terms of biological role, catalyzes the ATP-dependent phosphorylation of N-acetyl-L-glutamate. This Azoarcus sp. (strain BH72) protein is Acetylglutamate kinase.